The primary structure comprises 195 residues: Transcriptional regulator GfcR (195 aa).

The protein belongs to the purine/pyrimidine phosphoribosyltransferase family. GfcR subfamily.

The sequence is that of Transcriptional regulator GfcR from Archaeoglobus fulgidus (strain ATCC 49558 / DSM 4304 / JCM 9628 / NBRC 100126 / VC-16).